The following is a 117-amino-acid chain: UPF0102 protein FTW_1281 (117 aa).

The protein belongs to the UPF0102 family.

The chain is UPF0102 protein FTW_1281 from Francisella tularensis subsp. tularensis (strain WY96-3418).